The sequence spans 388 residues: G2/mitotic-specific cyclin-B2 (388 aa).

The disordered stretch occupies residues 46–67 (ATNGKVGPSKKPSKASCVQKPK).

Belongs to the cyclin family. Cyclin AB subfamily. In terms of assembly, interacts with the CDK1 protein kinase to form a serine/threonine kinase holoenzyme complex also known as maturation promoting factor (MPF). The cyclin subunit imparts substrate specificity to the complex.

Functionally, essential for the control of the cell cycle at the G2/M (mitosis) transition. In Oryzias curvinotus (Hynann ricefish), this protein is G2/mitotic-specific cyclin-B2 (ccnb2).